We begin with the raw amino-acid sequence, 112 residues long: Photosystem II reaction center Psb28 protein (112 aa).

This sequence belongs to the Psb28 family. Part of the photosystem II complex.

Its subcellular location is the cellular thylakoid membrane. The polypeptide is Photosystem II reaction center Psb28 protein (Microcystis aeruginosa (strain NIES-843 / IAM M-2473)).